The primary structure comprises 142 residues: Type II secretion system core protein G (142 aa).

Residues 1–8 (MQRRQQSG) constitute a propeptide, leader sequence. Position 9 is an N-methylphenylalanine (Phe-9). A helical membrane pass occupies residues 9-29 (FTLIEIMVVVVILGILAALVV). The tract at residues 121-142 (SLGADGKEGGSDNDADIGNWDN) is disordered.

Belongs to the GSP G family. As to quaternary structure, type II secretion system is composed of four main components: the outer membrane complex, the inner membrane complex, the cytoplasmic secretion ATPase and the periplasm-spanning pseudopilus. Forms homomultimers. Interacts with pseudopilin tip ternary complex made of XcpX, XcpU, XcpV and XcpW. Interacts with PilA. Cleaved by the prepilin peptidase. In terms of processing, methylated by prepilin peptidase at the amino group of the N-terminal phenylalanine once the leader sequence is cleaved.

It is found in the cell inner membrane. Functionally, core component of the type II secretion system required for the energy-dependent secretion of extracellular factors such as proteases and toxins from the periplasm. Pseudopilin (pilin-like) protein that polymerizes to form the pseudopilus. Further polymerization triggers pseudopilus growth. Type II pseudopilus confers increased bacterial adhesive capabilities. The chain is Type II secretion system core protein G (xcpT) from Pseudomonas aeruginosa (strain ATCC 15692 / DSM 22644 / CIP 104116 / JCM 14847 / LMG 12228 / 1C / PRS 101 / PAO1).